The following is a 565-amino-acid chain: Sulfite reductase [NADPH] hemoprotein beta-component (565 aa).

Cys-429, Cys-435, Cys-474, and Cys-478 together coordinate [4Fe-4S] cluster. Cys-478 is a siroheme binding site.

The protein belongs to the nitrite and sulfite reductase 4Fe-4S domain family. In terms of assembly, alpha(8)-beta(8). The alpha component is a flavoprotein, the beta component is a hemoprotein. Requires siroheme as cofactor. The cofactor is [4Fe-4S] cluster.

It carries out the reaction hydrogen sulfide + 3 NADP(+) + 3 H2O = sulfite + 3 NADPH + 4 H(+). The protein operates within sulfur metabolism; hydrogen sulfide biosynthesis; hydrogen sulfide from sulfite (NADPH route): step 1/1. Component of the sulfite reductase complex that catalyzes the 6-electron reduction of sulfite to sulfide. This is one of several activities required for the biosynthesis of L-cysteine from sulfate. The polypeptide is Sulfite reductase [NADPH] hemoprotein beta-component (Shewanella sp. (strain MR-4)).